Here is a 508-residue protein sequence, read N- to C-terminus: Aromatic-L-amino-acid decarboxylase (508 aa).

Threonine 82 contributes to the substrate binding site. The pyridoxal 5'-phosphate site is built by alanine 148 and serine 149. Histidine 192 provides a ligand contact to substrate. Residues threonine 246 and asparagine 300 each contribute to the pyridoxal 5'-phosphate site. An N6-(pyridoxal phosphate)lysine modification is found at lysine 303.

Belongs to the group II decarboxylase family. As to quaternary structure, homodimer. The cofactor is pyridoxal 5'-phosphate.

It catalyses the reaction L-dopa + H(+) = dopamine + CO2. The enzyme catalyses 5-hydroxy-L-tryptophan + H(+) = serotonin + CO2. Catalyzes the decarboxylation of L-3,4-dihydroxyphenylalanine (DOPA) to dopamine, L-5-hydroxytryptophan to serotonin and L-tryptophan to tryptamine. This chain is Aromatic-L-amino-acid decarboxylase (Ddc), found in Manduca sexta (Tobacco hawkmoth).